Here is an 80-residue protein sequence, read N- to C-terminus: uncharacterized protein (80 aa).

Positions 1 to 15 (MEVIVVIVVIVVVIA) are cleaved as a signal peptide. Residues 23–44 (NSNSNSNNSSDSSNESNNSDSS) are compositionally biased toward low complexity. The segment at 23–52 (NSNSNSNNSSDSSNESNNSDSSKNGGSDIY) is disordered. Asn-29, Asn-30, Asn-36, Asn-39, and Asn-64 each carry an N-linked (GlcNAc...) asparagine glycan.

It localises to the secreted. This is an uncharacterized protein from Dictyostelium discoideum (Social amoeba).